Consider the following 548-residue polypeptide: Poly(ADP-ribose) glycohydrolase 1 (548 aa).

Belongs to the poly(ADP-ribose) glycohydrolase family.

The catalysed reaction is [(1''-&gt;2')-ADP-alpha-D-ribose](n) + H2O = [(1''-&gt;2')-ADP-alpha-D-ribose](n-1) + ADP-D-ribose. Poly(ADP-ribose) synthesized after DNA damage is only present transiently and is rapidly degraded by poly(ADP-ribose) glycohydrolase. Involved in establishing period length of the circadian oscillator. May regulate post-translational poly(ADP-ribosyl)ation of an oscillator component. The sequence is that of Poly(ADP-ribose) glycohydrolase 1 (PARG1) from Arabidopsis thaliana (Mouse-ear cress).